Here is a 1502-residue protein sequence, read N- to C-terminus: E3 ubiquitin-protein ligase UPL4 (1502 aa).

The segment covering 1-21 (MENRGQKRMEVVEELPADKRA) has biased composition (basic and acidic residues). A disordered region spans residues 1 to 107 (MENRGQKRME…DYQRQRSSGD (107 aa)). The segment covering 22–46 (CNSQDFRPSTSGSSVQAQANDTNPG) has biased composition (polar residues). The segment covering 67-90 (DEEEQEEQDKEDSDYGSCDSDEED) has biased composition (acidic residues). The span at 91–107 (PRQRVLQDYQRQRSSGD) shows a compositional bias: basic and acidic residues. 4 ARM repeats span residues 143–183 (EESL…YLCD), 186–226 (PPSV…KISR), 228–265 (EPVACLNAGAIMAVLSFIDFFSTSIQRVAISTVVNICK), and 267–306 (LSSESPSPFMDAVPILCTLLQYEDRQLVENVAICLTKIAD). The segment at 833-881 (CQAESSSPMEIDSESSDASQLQGSQVEDQTQLPGQQNASSSETSSEKED) is disordered. Polar residues predominate over residues 849-875 (DASQLQGSQVEDQTQLPGQQNASSSET). Residues 1022–1096 (RPVPHSEFVS…IRHHPQHLSS (75 aa)) form a K-box region. The region spanning 1128-1502 (KMMELYGNQK…TEGQGSFHLS (375 aa)) is the HECT domain. Cys1469 (glycyl thioester intermediate) is an active-site residue.

The protein belongs to the UPL family. K-HECT subfamily.

It catalyses the reaction S-ubiquitinyl-[E2 ubiquitin-conjugating enzyme]-L-cysteine + [acceptor protein]-L-lysine = [E2 ubiquitin-conjugating enzyme]-L-cysteine + N(6)-ubiquitinyl-[acceptor protein]-L-lysine.. The protein operates within protein modification; protein ubiquitination. Probable E3 ubiquitin-protein ligase which mediates ubiquitination and subsequent proteasomal degradation of target proteins. In Arabidopsis thaliana (Mouse-ear cress), this protein is E3 ubiquitin-protein ligase UPL4 (UPL4).